Reading from the N-terminus, the 88-residue chain is Small ribosomal subunit protein uS19 (88 aa).

Belongs to the universal ribosomal protein uS19 family.

Its function is as follows. Protein S19 forms a complex with S13 that binds strongly to the 16S ribosomal RNA. This Ureaplasma parvum serovar 3 (strain ATCC 27815 / 27 / NCTC 11736) protein is Small ribosomal subunit protein uS19.